We begin with the raw amino-acid sequence, 386 residues long: Patatin (386 aa).

The N-terminal stretch at 1–23 (MATTKSFLILFFMILATTSSTCA) is a signal peptide. Residues 32–229 (LSIDGGGIKG…TVGDPALLSL (198 aa)) form the PNPLA domain. Positions 36 to 41 (GGGIKG) match the GXGXXG motif. The short motif at 75 to 79 (GTSTG) is the GXSXG element. Residue Ser77 is the Nucleophile of the active site. Asn115 carries an N-linked (GlcNAc...) asparagine glycan. The Proton acceptor role is filled by Asp215. Residues 215 to 217 (DGA) carry the DGA/G motif.

It belongs to the patatin family.

It is found in the vacuole. In terms of biological role, probable lipolytic acyl hydrolase (LAH), an activity which is thought to be involved in the response of tubers to pathogens. This is Patatin from Solanum tuberosum (Potato).